The primary structure comprises 332 residues: ATP-dependent 6-phosphofructokinase (332 aa).

Gly11 contributes to the ATP binding site. Residue 21-25 participates in ADP binding; that stretch reads RSVVR. ATP is bound by residues 72-73 and 102-105; these read RC and GDGS. Asp103 is a binding site for Mg(2+). 126-128 is a substrate binding site; the sequence is TID. Residue Asp128 is the Proton acceptor of the active site. ADP is bound at residue Arg155. Substrate is bound by residues Arg163 and 170–172; that span reads MGR. Residues 186-188, Arg212, and 214-216 each bind ADP; these read GAE and KLH. Residues Glu223, Arg256, and 262–265 contribute to the substrate site; that span reads HIQR.

Belongs to the phosphofructokinase type A (PFKA) family. ATP-dependent PFK group I subfamily. Prokaryotic clade 'B1' sub-subfamily. Homotetramer. The cofactor is Mg(2+).

Its subcellular location is the cytoplasm. It catalyses the reaction beta-D-fructose 6-phosphate + ATP = beta-D-fructose 1,6-bisphosphate + ADP + H(+). It participates in carbohydrate degradation; glycolysis; D-glyceraldehyde 3-phosphate and glycerone phosphate from D-glucose: step 3/4. Allosterically activated by ADP and other diphosphonucleosides, and allosterically inhibited by phosphoenolpyruvate. Catalyzes the phosphorylation of D-fructose 6-phosphate to fructose 1,6-bisphosphate by ATP, the first committing step of glycolysis. The protein is ATP-dependent 6-phosphofructokinase of Halothermothrix orenii (strain H 168 / OCM 544 / DSM 9562).